We begin with the raw amino-acid sequence, 218 residues long: Ribose-5-phosphate isomerase A (218 aa).

Substrate-binding positions include 28-31, 81-84, and 94-97; these read TGST, DGAD, and KGGG. Residue E103 is the Proton acceptor of the active site. Position 121 (K121) interacts with substrate.

This sequence belongs to the ribose 5-phosphate isomerase family. As to quaternary structure, homodimer.

It catalyses the reaction aldehydo-D-ribose 5-phosphate = D-ribulose 5-phosphate. It functions in the pathway carbohydrate degradation; pentose phosphate pathway; D-ribose 5-phosphate from D-ribulose 5-phosphate (non-oxidative stage): step 1/1. Catalyzes the reversible conversion of ribose-5-phosphate to ribulose 5-phosphate. The sequence is that of Ribose-5-phosphate isomerase A from Thioalkalivibrio sulfidiphilus (strain HL-EbGR7).